We begin with the raw amino-acid sequence, 401 residues long: UDP-GlcNAc:betaGal beta-1,3-N-acetylglucosaminyltransferase 9 (401 aa).

The Cytoplasmic portion of the chain corresponds to 1 to 10; sequence MRRRLRLRRE. A helical; Signal-anchor for type II membrane protein transmembrane segment spans residues 11–31; the sequence is ALLTLLLGATLGLLLYAQQEG. The Lumenal segment spans residues 32-401; that stretch reads AAPTTSAPRA…VPAGPFQWGP (370 aa). A disordered region spans residues 33–85; sequence APTTSAPRAQGRAAPGPTPGLRVFQAPDTGAAPPAYEGDTPEPPTPTGPFDFG. The span at 38 to 47 shows a compositional bias: low complexity; the sequence is APRAQGRAAP.

Belongs to the glycosyltransferase 31 family.

It is found in the golgi apparatus membrane. The polypeptide is UDP-GlcNAc:betaGal beta-1,3-N-acetylglucosaminyltransferase 9 (Bos taurus (Bovine)).